The chain runs to 296 residues: Ribosomal RNA small subunit methyltransferase H (296 aa).

S-adenosyl-L-methionine-binding positions include 38–40, Glu57, Phe80, Asp103, and His110; that span reads GVH.

Belongs to the methyltransferase superfamily. RsmH family.

It localises to the cytoplasm. It carries out the reaction cytidine(1402) in 16S rRNA + S-adenosyl-L-methionine = N(4)-methylcytidine(1402) in 16S rRNA + S-adenosyl-L-homocysteine + H(+). Its function is as follows. Specifically methylates the N4 position of cytidine in position 1402 (C1402) of 16S rRNA. This is Ribosomal RNA small subunit methyltransferase H from Borreliella burgdorferi (strain ATCC 35210 / DSM 4680 / CIP 102532 / B31) (Borrelia burgdorferi).